The primary structure comprises 339 residues: MRVYYDRDADINLIKGKKVVIVGYGSQGHAHALNLRDSGVKDIVIALRKGSASAKKAEAEGFKVMEVADAAAQADVVMMLTPDELQGDIYRESLHNQMKQGAALLFAHGLNVHFNLIEPRKDLDVLMVAPKGPGHTVRSEYLRGGGVPTLIAIAQDASGNAHDLGLSYASANGGGRAGIIETTFKEECETDLFGEQVVLCGGLVELIKAGFETLVEAGYAPEMAYFECLHEVKLIVDLIYEGGIANMNYSISNTAEYGEYVTGPRIITPETKAEMKRVLTDIQSGTFTRNWMLENKVNQTSFKATRARNAAHPIEEVGERLRAMMPWIKEKALVDKTKN.

The 182-residue stretch at 1–182 (MRVYYDRDAD…GGGRAGIIET (182 aa)) folds into the KARI N-terminal Rossmann domain. NADP(+) contacts are provided by residues 24–27 (YGSQ), R48, S51, S53, and 83–86 (DELQ). H108 is a catalytic residue. G134 provides a ligand contact to NADP(+). The KARI C-terminal knotted domain occupies 183–328 (TFKEECETDL…ERLRAMMPWI (146 aa)). Mg(2+) is bound by residues D191, E195, E227, and E231. Position 252 (S252) interacts with substrate.

This sequence belongs to the ketol-acid reductoisomerase family. It depends on Mg(2+) as a cofactor.

The enzyme catalyses (2R)-2,3-dihydroxy-3-methylbutanoate + NADP(+) = (2S)-2-acetolactate + NADPH + H(+). It catalyses the reaction (2R,3R)-2,3-dihydroxy-3-methylpentanoate + NADP(+) = (S)-2-ethyl-2-hydroxy-3-oxobutanoate + NADPH + H(+). The protein operates within amino-acid biosynthesis; L-isoleucine biosynthesis; L-isoleucine from 2-oxobutanoate: step 2/4. It participates in amino-acid biosynthesis; L-valine biosynthesis; L-valine from pyruvate: step 2/4. In terms of biological role, involved in the biosynthesis of branched-chain amino acids (BCAA). Catalyzes an alkyl-migration followed by a ketol-acid reduction of (S)-2-acetolactate (S2AL) to yield (R)-2,3-dihydroxy-isovalerate. In the isomerase reaction, S2AL is rearranged via a Mg-dependent methyl migration to produce 3-hydroxy-3-methyl-2-ketobutyrate (HMKB). In the reductase reaction, this 2-ketoacid undergoes a metal-dependent reduction by NADPH to yield (R)-2,3-dihydroxy-isovalerate. The polypeptide is Ketol-acid reductoisomerase (NADP(+)) (Methylobacterium nodulans (strain LMG 21967 / CNCM I-2342 / ORS 2060)).